Consider the following 632-residue polypeptide: Extracellular metalloproteinase 1 (632 aa).

Positions 1-19 are cleaved as a signal peptide; it reads MHGLLLAAGLLSLPLRVLA. The propeptide occupies 20–243; sequence HPQPSTSLTS…VHNVVDYVSH (224 aa). Residue Asn284 is glycosylated (N-linked (GlcNAc...) asparagine). A Zn(2+)-binding site is contributed by His427. The active site involves Glu428. Residue His431 participates in Zn(2+) binding. Residues Asn591 and Asn620 are each glycosylated (N-linked (GlcNAc...) asparagine).

It belongs to the peptidase M36 family. Zn(2+) is required as a cofactor.

The protein localises to the secreted. Functionally, secreted metalloproteinase that allows assimilation of proteinaceous substrates and probably acts as a virulence factor. In Arthroderma gypseum (strain ATCC MYA-4604 / CBS 118893) (Microsporum gypseum), this protein is Extracellular metalloproteinase 1 (MEP1).